Reading from the N-terminus, the 129-residue chain is uncharacterized protein (129 aa).

Residues 46 to 66 (FFHFFFSFLLHLISPAVTGGI) traverse the membrane as a helical segment.

Its subcellular location is the membrane. This is an uncharacterized protein from Saccharomyces cerevisiae (strain ATCC 204508 / S288c) (Baker's yeast).